The sequence spans 98 residues: Integration host factor subunit alpha (98 aa).

Belongs to the bacterial histone-like protein family. As to quaternary structure, heterodimer of an alpha and a beta chain.

Its function is as follows. This protein is one of the two subunits of integration host factor, a specific DNA-binding protein that functions in genetic recombination as well as in transcriptional and translational control. This chain is Integration host factor subunit alpha, found in Idiomarina loihiensis (strain ATCC BAA-735 / DSM 15497 / L2-TR).